The following is a 373-amino-acid chain: MNREKVQVGDSVAPAGAGVIVVAPQDGMDDKRLAAGELPVFNCVGGRDALPAESRETSPRHEPVPAGAPPTVHRTTSFSVLDILDPNKFTSKRQTPNRTGCEFAFGAENRSDDSNHTIEHKSYQEDYDCKKTSGILKDGFVFRSDECESDFTRGNQSDSELQEDLCSEESSALTGNNDAEFGQHEDDDSISKSPDGQQTQQSSSNGQNHQVKPKRKRSGSDSKSGKPRRARTAFTYEQLVALENKFKSTRYLSVCERLNLALSLSLTETQVKIWFQNRRTKWKKQNPGADTSAPTSGGGGGNGPSNGLGGLSPLSPSPPMSGHLSMHTSYPGHTPGGLVCTTQLPFLPGHAVLSPFMLGSQTYGAPTFYAPHL.

Disordered regions lie at residues 49-74 (ALPA…TVHR), 149-231 (SDFT…RRAR), and 281-328 (KWKK…SMHT). Basic and acidic residues predominate over residues 53–63 (ESRETSPRHEP). The segment covering 168-177 (EESSALTGNN) has biased composition (polar residues). Positions 196-210 (GQQTQQSSSNGQNHQ) are enriched in low complexity. A DNA-binding region (homeobox) is located at residues 227 to 286 (PRRARTAFTYEQLVALENKFKSTRYLSVCERLNLALSLSLTETQVKIWFQNRRTKWKKQN). Positions 296–310 (SGGGGGNGPSNGLGG) are enriched in gly residues.

It belongs to the NK-1 homeobox family.

It is found in the nucleus. In terms of biological role, may participate in the energy homeostasis regulation. This is NK1 transcription factor-related protein 1 from Danio rerio (Zebrafish).